The chain runs to 283 residues: Protein boule-like (283 aa).

The tract at residues 1 to 25 (MQTDSLSPSPNPVSPVPLNNPTSAP) is disordered. The 78-residue stretch at 33–110 (NRIFVGGIDF…KKLNIGPAIR (78 aa)) folds into the RRM domain. The region spanning 160–184 (PSRSVCSSPVMVAQPIYQQPAYHYQ) is the DAZ domain.

The protein belongs to the RRM DAZ family. In terms of assembly, interacts with DAZ1 and DAZL.

Its subcellular location is the cytoplasm. Probable RNA-binding protein, which may be required during spermatogenesis. May act by binding to the 3'-UTR of mRNAs and regulating their translation. This Macaca fascicularis (Crab-eating macaque) protein is Protein boule-like (BOLL).